We begin with the raw amino-acid sequence, 220 residues long: Fructose-6-phosphate aldolase 1 (220 aa).

K85 acts as the Schiff-base intermediate with substrate in catalysis.

The protein belongs to the transaldolase family. Type 3A subfamily. In terms of assembly, homodecamer.

Its subcellular location is the cytoplasm. It carries out the reaction beta-D-fructose 6-phosphate = dihydroxyacetone + D-glyceraldehyde 3-phosphate. Catalyzes the reversible formation of fructose 6-phosphate from dihydroxyacetone and D-glyceraldehyde 3-phosphate via an aldolization reaction. This Escherichia coli O6:H1 (strain CFT073 / ATCC 700928 / UPEC) protein is Fructose-6-phosphate aldolase 1 (fsaA).